The sequence spans 150 residues: Small ribosomal subunit protein eS19 (150 aa).

Belongs to the eukaryotic ribosomal protein eS19 family. Part of the 30S ribosomal subunit.

Its function is as follows. May be involved in maturation of the 30S ribosomal subunit. The chain is Small ribosomal subunit protein eS19 from Pyrococcus horikoshii (strain ATCC 700860 / DSM 12428 / JCM 9974 / NBRC 100139 / OT-3).